The following is a 271-amino-acid chain: 3-methyl-2-oxobutanoate hydroxymethyltransferase (271 aa).

2 residues coordinate Mg(2+): Asp-51 and Asp-90. 3-methyl-2-oxobutanoate contacts are provided by residues 51-52 (DS), Asp-90, and Lys-118. Glu-120 serves as a coordination point for Mg(2+). Residue Glu-186 is the Proton acceptor of the active site.

The protein belongs to the PanB family. In terms of assembly, homodecamer; pentamer of dimers. The cofactor is Mg(2+).

The protein resides in the cytoplasm. The catalysed reaction is 3-methyl-2-oxobutanoate + (6R)-5,10-methylene-5,6,7,8-tetrahydrofolate + H2O = 2-dehydropantoate + (6S)-5,6,7,8-tetrahydrofolate. It participates in cofactor biosynthesis; (R)-pantothenate biosynthesis; (R)-pantoate from 3-methyl-2-oxobutanoate: step 1/2. Catalyzes the reversible reaction in which hydroxymethyl group from 5,10-methylenetetrahydrofolate is transferred onto alpha-ketoisovalerate to form ketopantoate. This chain is 3-methyl-2-oxobutanoate hydroxymethyltransferase, found in Xanthomonas euvesicatoria pv. vesicatoria (strain 85-10) (Xanthomonas campestris pv. vesicatoria).